The following is a 735-amino-acid chain: Phosphoribosylformylglycinamidine synthase subunit PurL (735 aa).

His-48 is an active-site residue. 2 residues coordinate ATP: Tyr-51 and Lys-90. Glu-92 is a Mg(2+) binding site. Residues 93-96 and Arg-115 each bind substrate; that span reads SHNH. His-94 functions as the Proton acceptor in the catalytic mechanism. Asp-116 lines the Mg(2+) pocket. Gln-239 is a substrate binding site. Mg(2+) is bound at residue Asp-267. 311–313 contributes to the substrate binding site; that stretch reads ESQ. ATP contacts are provided by Asp-492 and Gly-529. Position 530 (Asn-530) interacts with Mg(2+). Ser-532 contacts substrate.

This sequence belongs to the FGAMS family. As to quaternary structure, monomer. Part of the FGAM synthase complex composed of 1 PurL, 1 PurQ and 2 PurS subunits.

The protein localises to the cytoplasm. The enzyme catalyses N(2)-formyl-N(1)-(5-phospho-beta-D-ribosyl)glycinamide + L-glutamine + ATP + H2O = 2-formamido-N(1)-(5-O-phospho-beta-D-ribosyl)acetamidine + L-glutamate + ADP + phosphate + H(+). It functions in the pathway purine metabolism; IMP biosynthesis via de novo pathway; 5-amino-1-(5-phospho-D-ribosyl)imidazole from N(2)-formyl-N(1)-(5-phospho-D-ribosyl)glycinamide: step 1/2. Its function is as follows. Part of the phosphoribosylformylglycinamidine synthase complex involved in the purines biosynthetic pathway. Catalyzes the ATP-dependent conversion of formylglycinamide ribonucleotide (FGAR) and glutamine to yield formylglycinamidine ribonucleotide (FGAM) and glutamate. The FGAM synthase complex is composed of three subunits. PurQ produces an ammonia molecule by converting glutamine to glutamate. PurL transfers the ammonia molecule to FGAR to form FGAM in an ATP-dependent manner. PurS interacts with PurQ and PurL and is thought to assist in the transfer of the ammonia molecule from PurQ to PurL. The protein is Phosphoribosylformylglycinamidine synthase subunit PurL of Bradyrhizobium sp. (strain BTAi1 / ATCC BAA-1182).